The primary structure comprises 73 residues: MGSFSIWHWLIVLVIVMLVFGTKKLRNIGQDLGGAVKGFKDGMKSAEDPNEQIPQSTTTAEKTVDVQAKDINK.

Residues 1-21 (MGSFSIWHWLIVLVIVMLVFG) traverse the membrane as a helical segment. The segment at 44–73 (KSAEDPNEQIPQSTTTAEKTVDVQAKDINK) is disordered. Positions 52 to 61 (QIPQSTTTAE) are enriched in polar residues. The segment covering 62–73 (KTVDVQAKDINK) has biased composition (basic and acidic residues).

This sequence belongs to the TatA/E family. As to quaternary structure, the Tat system comprises two distinct complexes: a TatABC complex, containing multiple copies of TatA, TatB and TatC subunits, and a separate TatA complex, containing only TatA subunits. Substrates initially bind to the TatABC complex, which probably triggers association of the separate TatA complex to form the active translocon.

It is found in the cell inner membrane. In terms of biological role, part of the twin-arginine translocation (Tat) system that transports large folded proteins containing a characteristic twin-arginine motif in their signal peptide across membranes. TatA could form the protein-conducting channel of the Tat system. This chain is Sec-independent protein translocase protein TatA, found in Polynucleobacter asymbioticus (strain DSM 18221 / CIP 109841 / QLW-P1DMWA-1) (Polynucleobacter necessarius subsp. asymbioticus).